The chain runs to 458 residues: Sugar transporter ERD6-like 10 (458 aa).

12 consecutive transmembrane segments (helical) span residues 17–37 (ITACVILSTFVAVCSSFSYGC), 66–86 (FLNLGGAVGALFSGQLAVILG), 96–116 (LFCIFGWLSIAFAKNVLWLDL), 119–139 (ISLGIGVGLTSYVVPVYIAEI), 150–170 (ASTLLLQNSGISLIYFFGTVI), 174–194 (VLAVIGALPCFIPVIGIYFIP), 257–277 (LVVGIGLMLIQQLSGASGITY), 292–312 (LGSMIFGVFVIPKALVGLILV), 319–339 (PLLLASAVGMSIGSLLIGVSF), 350–370 (FIPVFVFINILVYFGFFAIGI), 393–413 (IVALTSWTTGWFVSYGFNFMF), and 419–439 (GTFYIFAMVGGLSLLFIWMLV).

This sequence belongs to the major facilitator superfamily. Sugar transporter (TC 2.A.1.1) family.

Its subcellular location is the membrane. Sugar transporter. The protein is Sugar transporter ERD6-like 10 of Arabidopsis thaliana (Mouse-ear cress).